Reading from the N-terminus, the 229-residue chain is Transmembrane emp24 domain-containing protein 5 (229 aa).

The N-terminal stretch at 1 to 27 (MGVRMWLPFPMLLLSALPATLLSGAAG) is a signal peptide. Residues 28 to 196 (FTPSLDSDFT…IQESNFDRVN (169 aa)) are Lumenal-facing. The region spanning 45 to 126 (KECFYQPMPL…EKVIFFELIL (82 aa)) is the GOLD domain. A helical transmembrane segment spans residues 197–217 (FWSVVNLMVMVVVSAIQVYTL). Over 218-229 (KSLFEDKRKSRT) the chain is Cytoplasmic.

The protein belongs to the EMP24/GP25L family. In terms of assembly, interacts with TMED9 and TMED10.

It localises to the endoplasmic reticulum membrane. It is found in the golgi apparatus. The protein resides in the cis-Golgi network membrane. The protein localises to the endoplasmic reticulum-Golgi intermediate compartment membrane. Its function is as follows. Potential role in vesicular protein trafficking, mainly in the early secretory pathway. Required for the maintenance of the Golgi apparatus; involved in protein exchange between Golgi stacks during assembly. Probably not required for COPI-vesicle-mediated retrograde transport. The polypeptide is Transmembrane emp24 domain-containing protein 5 (Tmed5) (Rattus norvegicus (Rat)).